A 169-amino-acid chain; its full sequence is uncharacterized protein (169 aa).

The first 21 residues, 1 to 21 (MVPVARASLFTLACLLVSVCA), serve as a signal peptide directing secretion.

In terms of tissue distribution, component of the acid-soluble and acid-insoluble organic matrix of calcified shell layers (at protein level).

The protein localises to the secreted. This is an uncharacterized protein from Haliotis asinina (Donkey's ear abalone).